Consider the following 567-residue polypeptide: Thiol:disulfide interchange protein DsbD (567 aa).

The N-terminal stretch at 1–19 (MAQRIFTLILLLCSTSAFA) is a signal peptide. 2 cysteine pairs are disulfide-bonded: cysteine 122–cysteine 128 and cysteine 185–cysteine 307. The next 7 helical transmembrane spans lie at 170–192 (ALWA…MYPL), 212–234 (LAFI…VAAA), 246–268 (YVLI…LFTL), 297–319 (GAIA…LLYI), 326–348 (WLGG…LVTV), 358–380 (GPWM…VFLL), and 387–409 (AWGL…ITSL). The region spanning 435–567 (QDWAFGSPSA…FSAHLHDRQP (133 aa)) is the Thioredoxin domain. Residues cysteine 482 and cysteine 485 are joined by a disulfide bond.

Belongs to the thioredoxin family. DsbD subfamily.

The protein resides in the cell inner membrane. The enzyme catalyses [protein]-dithiol + NAD(+) = [protein]-disulfide + NADH + H(+). It catalyses the reaction [protein]-dithiol + NADP(+) = [protein]-disulfide + NADPH + H(+). In terms of biological role, required to facilitate the formation of correct disulfide bonds in some periplasmic proteins and for the assembly of the periplasmic c-type cytochromes. Acts by transferring electrons from cytoplasmic thioredoxin to the periplasm. This transfer involves a cascade of disulfide bond formation and reduction steps. In Salmonella typhi, this protein is Thiol:disulfide interchange protein DsbD.